The primary structure comprises 441 residues: Phosphoglucosamine mutase (441 aa).

Catalysis depends on serine 100, which acts as the Phosphoserine intermediate. Mg(2+)-binding residues include serine 100, aspartate 239, aspartate 241, and aspartate 243. At serine 100 the chain carries Phosphoserine.

It belongs to the phosphohexose mutase family. Requires Mg(2+) as cofactor. Activated by phosphorylation.

The catalysed reaction is alpha-D-glucosamine 1-phosphate = D-glucosamine 6-phosphate. Catalyzes the conversion of glucosamine-6-phosphate to glucosamine-1-phosphate. This Ruthia magnifica subsp. Calyptogena magnifica protein is Phosphoglucosamine mutase.